A 543-amino-acid chain; its full sequence is Kelch repeat and BTB domain-containing protein 4 (543 aa).

The region spanning Ala70–Ala137 is the BTB domain. Positions Cys172–His264 constitute a BACK domain. Kelch repeat units follow at residues His264–Gly310, Asp311–Gly353, Ala356–Gly403, Ile405–Asp455, and Val457–Arg505.

Component of the BCR(KBTBD4) E3 ubiquitin ligase complex, at least composed of CUL3, KBTBD4 and RBX1.

Functionally, substrate-specific adapter of a BCR (BTB-CUL3-RBX1) E3 ubiquitin ligase complex which targets CoREST corepressor complex components RCOR1, KDM1A/LSD1 and HDAC2 for proteasomal degradation. RCOR1 is likely to be the primary target while degradation of KDM1A and HDAC2 is likely due to their association with RCOR1. Also targets RCOR3, MIER2 and MIER3 for proteasomal degradation as well as associated proteins ZNF217 and RREB1. Degradation is dependent on the presence of an ELM2 domain in the target proteins. The protein is Kelch repeat and BTB domain-containing protein 4 (KBTBD4) of Macaca fascicularis (Crab-eating macaque).